We begin with the raw amino-acid sequence, 703 residues long: MERAAPSRRVPLPLLLLGGLALLAAGVDADVLLEACCADGHRMATHQKDCSLPYATESKECRMVQEQCCHSQLEELHCATGISLANEQDRCATPHGDNASLEATFVKRCCHCCLLGRAAQAQGQSCEYSLMVGYQCGQVFQACCVKSQETGDLDVGGLQETDKIIEVEEEQEDPYLNDRCRGGGPCKQQCRDTGDEVVCSCFVGYQLLSDGVSCEDVNECITGSHSCRLGESCINTVGSFRCQRDSSCGTGYELTEDNSCKDIDECESGIHNCLPDFICQNTLGSFRCRPKLQCKSGFIQDALGNCIDINECLSISAPCPIGHTCINTEGSYTCQKNVPNCGRGYHLNEEGTRCVDVDECAPPAEPCGKGHRCVNSPGSFRCECKTGYYFDGISRMCVDVNECQRYPGRLCGHKCENTLGSYLCSCSVGFRLSVDGRSCEDINECSSSPCSQECANVYGSYQCYCRRGYQLSDVDGVTCEDIDECALPTGGHICSYRCINIPGSFQCSCPSSGYRLAPNGRNCQDIDECVTGIHNCSINETCFNIQGGFRCLAFECPENYRRSAATLQQEKTDTVRCIKSCRPNDVTCVFDPVHTISHTVISLPTFREFTRPEEIIFLRAITPPHPASQANIIFDITEGNLRDSFDIIKRYMDGMTVGVVRQVRPIVGPFHAVLKLEMNYVVGGVVSHRNVVNVHIFVSEYWF.

The N-terminal stretch at 1 to 29 is a signal peptide; the sequence is MERAAPSRRVPLPLLLLGGLALLAAGVDA. 35 disulfides stabilise this stretch: C36–C61, C37–C68, C50–C69, C78–C109, C91–C110, C112–C136, C113–C143, C126–C144, C180–C190, C186–C199, C201–C214, C220–C233, C227–C242, C248–C260, C266–C279, C273–C288, C294–C306, C312–C325, C319–C334, C341–C354, C360–C373, C367–C382, C384–C397, C403–C415, C411–C424, C426–C439, C445–C454, C450–C463, C465–C479, C485–C498, C494–C507, C509–C523, C529–C542, C536–C551, and C556–C577. 3 Anaphylatoxin-like domains span residues 36–76, 77–111, and 112–144; these read CCAD…LEEL, HCAT…RCCH, and CCLL…QACC. N-linked (GlcNAc...) (complex) asparagine glycosylation is present at N98. Residues 176 to 215 form the EGF-like 1 domain; sequence LNDRCRGGGPCKQQCRDTGDEVVCSCFVGYQLLSDGVSCE. In terms of domain architecture, EGF-like 2; calcium-binding spans 216 to 261; sequence DVNECITGSHSCRLGESCINTVGSFRCQRDSSCGTGYELTEDNSCK. The EGF-like 3; calcium-binding domain occupies 262–307; the sequence is DIDECESGIHNCLPDFICQNTLGSFRCRPKLQCKSGFIQDALGNCI. The 48-residue stretch at 308 to 355 folds into the EGF-like 4; calcium-binding domain; it reads DINECLSISAPCPIGHTCINTEGSYTCQKNVPNCGRGYHLNEEGTRCV. The EGF-like 5; calcium-binding domain occupies 356–398; the sequence is DVDECAPPAEPCGKGHRCVNSPGSFRCECKTGYYFDGISRMCV. The tract at residues 356 to 440 is self-association and FN1-binding; calcium is necessary for homotypic binding, but not for heterotypic binding; the sequence is DVDECAPPAE…RLSVDGRSCE (85 aa). Residues 399 to 440 enclose the EGF-like 6; calcium-binding domain; it reads DVNECQRYPGRLCGHKCENTLGSYLCSCSVGFRLSVDGRSCE. The region spanning 441–480 is the EGF-like 7; calcium-binding domain; sequence DINECSSSPCSQECANVYGSYQCYCRRGYQLSDVDGVTCE. Positions 481–524 constitute an EGF-like 8; calcium-binding domain; the sequence is DIDECALPTGGHICSYRCINIPGSFQCSCPSSGYRLAPNGRNCQ. An EGF-like 9; calcium-binding domain is found at 525-578; that stretch reads DIDECVTGIHNCSINETCFNIQGGFRCLAFECPENYRRSAATLQQEKTDTVRCI. N-linked (GlcNAc...) asparagine glycans are attached at residues N535 and N539.

The protein belongs to the fibulin family. As to quaternary structure, homomultimerizes and interacts with various extracellular matrix components such as FN1, LAMA1, LAMA2, NID, ACAN, CSPG2 and type IV collagen. Also interacts with APP and FGB. Interacts with FBLN7. Interacts with CCN3. (Microbial infection) Interacts with human papillomavirus/HPV type 16, 18 and 31 proteins E6. Isoform A and isoform B are only expressed in placenta. Isoform C and isoform D are expressed in a variety of tissues and cultured cells.

Its subcellular location is the secreted. It is found in the extracellular space. The protein resides in the extracellular matrix. In terms of biological role, incorporated into fibronectin-containing matrix fibers. May play a role in cell adhesion and migration along protein fibers within the extracellular matrix (ECM). Could be important for certain developmental processes and contribute to the supramolecular organization of ECM architecture, in particular to those of basement membranes. Has been implicated in a role in cellular transformation and tumor invasion, it appears to be a tumor suppressor. May play a role in haemostasis and thrombosis owing to its ability to bind fibrinogen and incorporate into clots. Could play a significant role in modulating the neurotrophic activities of APP, particularly soluble APP. This chain is Fibulin-1 (FBLN1), found in Homo sapiens (Human).